We begin with the raw amino-acid sequence, 426 residues long: Citrate transporter (426 aa).

Helical transmembrane passes span methionine 1–arginine 21, leucine 22–glycine 42, threonine 59–phenylalanine 79, isoleucine 86–methionine 106, leucine 137–glycine 157, proline 176–glycine 196, leucine 232–phenylalanine 252, alanine 278–leucine 298, alanine 318–methionine 338, phenylalanine 343–alanine 363, leucine 377–glycine 397, and tryptophan 406–phenylalanine 426.

This sequence belongs to the CitM (TC 2.A.11) transporter family.

Its subcellular location is the cell membrane. Functionally, transports the free citrate anion. Probably cotransports citrate and at least three or four protons. The citrate uptake is inhibited by the presence of magnesium ions. The protein is Citrate transporter (citN) of Bacillus subtilis (strain 168).